Reading from the N-terminus, the 211-residue chain is Small ribosomal subunit protein uS3 (211 aa).

The region spanning 38–106 (LRNFLKKRLF…EIYLNIQEVR (69 aa)) is the KH type-2 domain.

The protein belongs to the universal ribosomal protein uS3 family. Part of the 30S ribosomal subunit. Forms a tight complex with proteins S10 and S14.

In terms of biological role, binds the lower part of the 30S subunit head. Binds mRNA in the 70S ribosome, positioning it for translation. In Geobacter metallireducens (strain ATCC 53774 / DSM 7210 / GS-15), this protein is Small ribosomal subunit protein uS3.